The primary structure comprises 188 residues: Peptidyl-tRNA hydrolase (188 aa).

Residue Y14 participates in tRNA binding. H19 functions as the Proton acceptor in the catalytic mechanism. 3 residues coordinate tRNA: Y64, N66, and N112.

Belongs to the PTH family. In terms of assembly, monomer.

The protein resides in the cytoplasm. The enzyme catalyses an N-acyl-L-alpha-aminoacyl-tRNA + H2O = an N-acyl-L-amino acid + a tRNA + H(+). Functionally, hydrolyzes ribosome-free peptidyl-tRNAs (with 1 or more amino acids incorporated), which drop off the ribosome during protein synthesis, or as a result of ribosome stalling. Its function is as follows. Catalyzes the release of premature peptidyl moieties from peptidyl-tRNA molecules trapped in stalled 50S ribosomal subunits, and thus maintains levels of free tRNAs and 50S ribosomes. The protein is Peptidyl-tRNA hydrolase of Clostridium tetani (strain Massachusetts / E88).